A 921-amino-acid polypeptide reads, in one-letter code: Translation initiation factor IF-2 (921 aa).

The tract at residues 1 to 296 is disordered; it reads MADQNTPGDK…PGPQKQRGRL (296 aa). Low complexity predominate over residues 80–89; that stretch reads RPSGPRPSGG. The segment covering 117–183 has biased composition (basic and acidic residues); that stretch reads ARVRDLEERR…AKKRFGEGEA (67 aa). Composition is skewed to low complexity over residues 184–237 and 248–257; these read PRPA…ARPA and GRAPAAVAAG. A tr-type G domain is found at 417 to 586; that stretch reads PRSPVVTVMG…MIALQADILD (170 aa). The segment at 426-433 is G1; the sequence is GHVDHGKT. A GTP-binding site is contributed by 426-433; that stretch reads GHVDHGKT. The segment at 451–455 is G2; that stretch reads GITQH. The G3 stretch occupies residues 474–477; it reads DTPG. GTP-binding positions include 474 to 478 and 528 to 531; these read DTPGH and NKID. Positions 528 to 531 are G4; sequence NKID. Residues 564 to 566 form a G5 region; sequence SAK.

The protein belongs to the TRAFAC class translation factor GTPase superfamily. Classic translation factor GTPase family. IF-2 subfamily.

Its subcellular location is the cytoplasm. Its function is as follows. One of the essential components for the initiation of protein synthesis. Protects formylmethionyl-tRNA from spontaneous hydrolysis and promotes its binding to the 30S ribosomal subunits. Also involved in the hydrolysis of GTP during the formation of the 70S ribosomal complex. The sequence is that of Translation initiation factor IF-2 from Bradyrhizobium sp. (strain ORS 278).